The sequence spans 966 residues: SH3 domain-binding protein 4 (966 aa).

In terms of domain architecture, SH3 1 spans 57-116 (GAAREVVAIKDCCPSSFTTLKFSKGDRLYVLDSSGAEWWYAHNNTEMGYIPAAYVEPINY). Positions 322-457 (TNIVCRLDSS…LEPCMYVCVV (136 aa)) constitute a ZU5 domain. One can recognise an SH3 2 domain in the interval 657-727 (NNLKFGKLIK…HAKNVLVVGK (71 aa)).

In terms of assembly, homodimer or homooligomer.

It is found in the membrane. It localises to the clathrin-coated pit. The protein localises to the cytoplasmic vesicle. Its subcellular location is the clathrin-coated vesicle. The protein resides in the nucleus. Possible role in regulating endocytosis of the transferrin receptor at the plasma membrane. Alternatively, may function as a negative regulator of the amino acid-induced TOR signaling by inhibiting the formation of active Rag GTPase complexes. Preferentially binds inactive Rag GTPase complexes and prevents their interaction with the mTORC1 complex inhibiting its relocalization to lysosomes and its activation. Thereby, may indirectly regulate cell growth, proliferation and autophagy. The protein is SH3 domain-binding protein 4 (sh3bp4) of Seriola quinqueradiata (Five-ray yellowtail).